A 184-amino-acid chain; its full sequence is Photosystem I assembly protein Ycf4 (184 aa).

2 helical membrane passes run Phe22–Ser42 and Ile57–Ser77.

The protein belongs to the Ycf4 family.

Its subcellular location is the plastid. It is found in the chloroplast thylakoid membrane. Functionally, seems to be required for the assembly of the photosystem I complex. This is Photosystem I assembly protein Ycf4 from Populus trichocarpa (Western balsam poplar).